Here is a 201-residue protein sequence, read N- to C-terminus: Large ribosomal subunit protein uL4 (201 aa).

A disordered region spans residues 44-71 (RAQKTRAEVTGSGKKPWRQKGTGRARSG).

Belongs to the universal ribosomal protein uL4 family. In terms of assembly, part of the 50S ribosomal subunit.

One of the primary rRNA binding proteins, this protein initially binds near the 5'-end of the 23S rRNA. It is important during the early stages of 50S assembly. It makes multiple contacts with different domains of the 23S rRNA in the assembled 50S subunit and ribosome. Functionally, forms part of the polypeptide exit tunnel. The chain is Large ribosomal subunit protein uL4 from Edwardsiella ictaluri (strain 93-146).